Consider the following 151-residue polypeptide: MGFFSGEYDCTVDAKGRMVLPARIKSNLPDIDAGNVVLTRGFESCIVLYSQTEFKKIYSKVSGLNEFSEEYRVFQRNFFRGINEVELDSNGRLLIPKMLMAHAQLEKDITVVGMGNRVEIWSPDLYQKFLIQDSSEFAQLAEKYLAPTKKE.

2 SpoVT-AbrB domains span residues 7 to 53 (EYDC…SQTE) and 82 to 125 (INEV…SPDL).

Belongs to the MraZ family. In terms of assembly, forms oligomers.

It localises to the cytoplasm. Its subcellular location is the nucleoid. The polypeptide is Transcriptional regulator MraZ (Cytophaga hutchinsonii (strain ATCC 33406 / DSM 1761 / CIP 103989 / NBRC 15051 / NCIMB 9469 / D465)).